A 1327-amino-acid chain; its full sequence is uncharacterized protein (1327 aa).

884–885 (WD) provides a ligand contact to substrate. Glu1023 serves as the catalytic Proton donor. Substrate is bound at residue 1143-1144 (KQ).

In the N-terminal section; belongs to the trehalose phosphatase family. The protein in the C-terminal section; belongs to the glycosyl hydrolase 65 family.

This is an uncharacterized protein from Mycobacterium tuberculosis (strain CDC 1551 / Oshkosh).